Consider the following 279-residue polypeptide: MVDHLANTEINSQRIAAVESCFGASGQPLALPGRVLLGEGVLTKECRKKAKPRIFFLFNDILVYGSIVLNKRKYRSQHIIPLEEVTLELLPETLQAKNRWMIKTAKKSFVVSAASATERQEWISHIEECVRRQLRATGRPPSTEHAAPWIPDKATDICMRCTQTRFSALTRRHHCRKCGFVVCAECSRQRFLLPRLSPKPVRVCSLCYRELAAQQRQEEAEEQGAGSPGQPAHLARPICGASSGDDDDSDEDKEGSRDGDWPSSVEFYASGVAWSAFHS.

The region spanning 35–131 is the PH domain; that stretch reads VLLGEGVLTK…WISHIEECVR (97 aa). The FYVE-type zinc finger occupies 152–212; the sequence is DKATDICMRC…VCSLCYRELA (61 aa). Residues C158, C161, C175, C178, C183, C186, C204, and C207 each contribute to the Zn(2+) site. The interval 218–264 is disordered; that stretch reads EEAEEQGAGSPGQPAHLARPICGASSGDDDDSDEDKEGSRDGDWPSS. The segment covering 244 to 253 has biased composition (acidic residues); that stretch reads GDDDDSDEDK.

Highly expressed in heart and skeletal muscle. Weakly expressed in brain, thymus, spleen, kidney, liver, small intestine, placenta and lung.

The protein localises to the nucleus. It localises to the cytoplasm. It is found in the perinuclear region. The protein resides in the lysosome. Its function is as follows. May induce apoptosis through the lysosomal-mitochondrial pathway. Translocates to the lysosome initiating the permeabilization of lysosomal membrane (LMP) and resulting in the release of CTSD and CTSL to the cytoplasm. Triggers the caspase-independent apoptosis by altering mitochondrial membrane permeabilization (MMP) resulting in the release of PDCD8. The polypeptide is Pleckstrin homology domain-containing family F member 1 (PLEKHF1) (Homo sapiens (Human)).